Consider the following 2187-residue polypeptide: Non-reducing polyketide synthase phnA (2187 aa).

Residues 17–255 form an N-terminal acylcarrier protein transacylase domain (SAT) region; it reads LLFGDLSLAH…KYLDIDSPYH (239 aa). The 437-residue stretch at 383-819 folds into the Ketosynthase family 3 (KS3) domain; that stretch reads HSKIAIVGYS…GGNTAMLIED (437 aa). Residues Cys-555, His-690, and His-735 each act as for beta-ketoacyl synthase activity in the active site. The segment at 926–1226 is malonyl-CoA:ACP transacylase (MAT) domain; the sequence is RVAFAFTGQG…GMVKGTIDSR (301 aa). Ser-1021 (for acyl/malonyl transferase activity) is an active-site residue. The segment at 1321 to 1637 is product template (PT) domain; sequence PCAQQIVEEF…PRRALDHLLP (317 aa). Residues 1324 to 1458 form an N-terminal hotdog fold region; it reads QQIVEEFHDS…LDVVLYPGQQ (135 aa). The PKS/mFAS DH domain maps to 1324–1633; it reads QQIVEEFHDS…FQGVPRRALD (310 aa). The active-site Proton acceptor; for dehydratase activity is the His-1356. A C-terminal hotdog fold region spans residues 1486–1633; that stretch reads TETHLIKRGM…FQGVPRRALD (148 aa). The Proton donor; for dehydratase activity role is filled by Asp-1546. Low complexity predominate over residues 1652 to 1669; the sequence is KAPVAAVAPPRTPTKAAP. Residues 1652–1681 are disordered; sequence KAPVAAVAPPRTPTKAAPQSRQAAPKQKRS. Carrier domains lie at 1684-1758 and 1796-1874; these read SDVF…SNSD and SSES…YNVM. O-(pantetheine 4'-phosphoryl)serine is present on Ser-1718. Positions 1754–1796 are disordered; the sequence is LSNSDEDDTPSGDSSTYEDSESQITSPASSVGPETPGGGEFGS. Positions 1757–1774 are enriched in acidic residues; that stretch reads SDEDDTPSGDSSTYEDSE. Ser-1834 is modified (O-(pantetheine 4'-phosphoryl)serine). Positions 1906–2183 are thioesterase (TE) domain; that stretch reads SSLPQATSIL…PEMGEAVAEF (278 aa). Ser-2009 (for thioesterase activity) is an active-site residue.

It carries out the reaction 6 malonyl-CoA + acetyl-CoA + 5 H(+) = 3,6,7,9-tetrahydroxy-3-methyl-2,3-dihydro-1H-naphtho[2,1-b]pyran-1-one + 6 CO2 + 7 CoA + H2O. Its pathway is secondary metabolite biosynthesis. In terms of biological role, non-reducing polyketide synthase; part of the gene cluster that mediates the biosynthesis of phenalenones such as herqueinone, compounds that have been reported to treat tumors, bacterial infections and/or mycoses, and rheumatic diseases. The non-reducing polyketide synthase phnA synthesizes the heptaketide backbone and cyclizes it into the angular, hemiketal-containing naphtho-gamma-pyrone prephenalenone. The product template (PT) domain of phnA catalyzes only the C4-C9 aldol condensation, which is unprecedented among known PT domains. The transformation of prephenalenone to phenalenones requires an FAD-dependent monooxygenase phnB, which catalyzes the C2 aromatic hydroxylation of prephenalenone and ring opening of the gamma-pyrone ring simultaneously. Subsequent intramolecular deprotonation of C3 phenolic oxygen accelerates phenalenone ring closure to yield the tricyclic phenalenone core with a C2 hydroxylation. The prenyltransferase phnF further catalyzes reverse C-prenylation of phenalenone by direct electrophilic substitution at C6, or possibly via first a forward O-prenylation of a neighboring phenol in phenalenone, followed by a Claisen rearrangement. The hydroalkoxylation enzyme phnH catalyzes the 5-exo-trig cyclization via acid catalysis after the spontaneous deprotonation of 7-OH, which leads to the formation of the dihydrobenzofuran atrovenetin. Atrovenetin is further converted to deoxyherqueinone by the O-methyltransferase phnC which can methylate C2-OH to stabilize the northern portion of the phenalenone core. Finally, the oxidoreductase phnG converts deoxyherqueinone to herqueinone via C6 hydroxylation. The chain is Non-reducing polyketide synthase phnA from Penicillium herquei.